We begin with the raw amino-acid sequence, 593 residues long: PiggyBac transposable element-derived protein 3 (593 aa).

Disordered regions lie at residues 27-53 and 69-105; these read IQPPENATAPVSDEESGDEEGGTINNL and SDAESDSDDPSYAPKDDSPDEVPSTFTVQQPPPSRRR. A compositionally biased stretch (acidic residues) spans 38–47; the sequence is SDEESGDEEG. Ser86 is modified (phosphoserine).

Expressed in heart and oocytes, but not in granulosa cells (at protein level).

The protein resides in the nucleus. Its function is as follows. Binds in vitro to PGBD3-related transposable elements, called MER85s; these non-autonomous 140 bp elements are characterized by the presence of PGBD3 terminal inverted repeats and the absence of internal transposase ORF. The sequence is that of PiggyBac transposable element-derived protein 3 (PGBD3) from Homo sapiens (Human).